The sequence spans 830 residues: Kinesin-like protein KIN-14B (830 aa).

Residues 56–97 (ENISDDNTESEAKVQKIQDELVSLNAQLKQITLQRREALNNY) are a coiled coil. The region spanning 103 to 425 (NIRVFCRIRP…LGFATRVRSI (323 aa)) is the Kinesin motor domain. 182–189 (GQTGSGKT) is a binding site for ATP. Positions 434-476 (EMKARKETLLIDLGQKVNDLEHECEDIRRKIKNLEESMEHLTG) form a coiled coil.

This sequence belongs to the TRAFAC class myosin-kinesin ATPase superfamily. Kinesin family. KIN-14 subfamily.

This is Kinesin-like protein KIN-14B from Oryza sativa subsp. japonica (Rice).